We begin with the raw amino-acid sequence, 188 residues long: Vascular endothelial growth factor A-A (188 aa).

The first 23 residues, 1–23 (MNLVVYLIQLFLAALLHLSAVKA), serve as a signal peptide directing secretion. 3 cysteine pairs are disulfide-bonded: cysteine 49-cysteine 91, cysteine 80-cysteine 125, and cysteine 84-cysteine 127. The N-linked (GlcNAc...) asparagine glycan is linked to asparagine 98.

This sequence belongs to the PDGF/VEGF growth factor family. Homodimer; disulfide-linked. Isoform VEGF165 binds kdr and kdrl. Predominantly expressed in regions associated with active vascularization. From 15-16 hours post-fertilization (hpf), expressed in the anterior forebrain, the mesoderm underlying and lateral to the anterior hindbrain, the mesoderm underlying and lateral to the posterior hindbrain, and in the ventral medial portions of the somites. By 30-36 hpf, expression in the somites is decreased, while strong expression is observed in the region of the developing glomeruli and in the anterior portion of the pronephric ducts, the pharyngeal arches, and the brain. By 72 hpf, expression remains only in the pronephros region.

The protein localises to the secreted. Its function is as follows. Growth factor active in angiogenesis, vasculogenesis and endothelial cell growth. Induces endothelial cell proliferation, promotes cell migration, inhibits apoptosis, and induces permeabilization of blood vessels. Required for intersegmental vessel development in the tail during embryogenesis. Acts both upstream of kdr and tie1 to stimulate endothelial cell differentiation, and upstream of gata1 to stimulate hematopoietic cell differentiation. The chain is Vascular endothelial growth factor A-A (vegfaa) from Danio rerio (Zebrafish).